The chain runs to 399 residues: Elongation factor Tu (399 aa).

Residues 10–209 (KPHVNIGTIG…AVDSYIPTPK (200 aa)) form the tr-type G domain. A G1 region spans residues 19-26 (GHVDHGKT). 19 to 26 (GHVDHGKT) lines the GTP pocket. T26 contributes to the Mg(2+) binding site. The segment at 60-64 (GITIA) is G2. Residues 81 to 84 (DCPG) are G3. GTP is bound by residues 81-85 (DCPGH) and 136-139 (NKTD). Residues 136–139 (NKTD) are G4. The interval 174–176 (SAL) is G5.

Belongs to the TRAFAC class translation factor GTPase superfamily. Classic translation factor GTPase family. EF-Tu/EF-1A subfamily. As to quaternary structure, monomer.

The protein localises to the cytoplasm. The enzyme catalyses GTP + H2O = GDP + phosphate + H(+). Its function is as follows. GTP hydrolase that promotes the GTP-dependent binding of aminoacyl-tRNA to the A-site of ribosomes during protein biosynthesis. This Campylobacter hominis (strain ATCC BAA-381 / DSM 21671 / CCUG 45161 / LMG 19568 / NCTC 13146 / CH001A) protein is Elongation factor Tu.